The sequence spans 82 residues: MNLMDENTPKNVGIYVRVSTEEQAKEGYSISAQKEKLKAYCISQGWDSYKFYIDEGKSAKDIHRPSLELMLRHIEQGIMTHC.

Residues Asn11 to Cys82 form the Resolvase/invertase-type recombinase catalytic domain. Catalysis depends on Ser19, which acts as the O-(5'-phospho-DNA)-serine intermediate.

Belongs to the site-specific recombinase resolvase family.

This is an uncharacterized protein from Bacillus phage phi105 (Bacteriophage phi-105).